A 113-amino-acid polypeptide reads, in one-letter code: Protein translation factor SUI1 homolog (113 aa).

Belongs to the SUI1 family.

Functionally, probably involved in translation. In Spuriopimpinella brachycarpa (Chamnamul), this protein is Protein translation factor SUI1 homolog.